The following is a 552-amino-acid chain: Arginine--tRNA ligase (552 aa).

A 'HIGH' region motif is present at residues 130 to 140 (ANPTGPLSIGH).

Belongs to the class-I aminoacyl-tRNA synthetase family. In terms of assembly, monomer.

It is found in the cytoplasm. The catalysed reaction is tRNA(Arg) + L-arginine + ATP = L-arginyl-tRNA(Arg) + AMP + diphosphate. The polypeptide is Arginine--tRNA ligase (Desulfotalea psychrophila (strain LSv54 / DSM 12343)).